We begin with the raw amino-acid sequence, 107 residues long: Heme-degrading monooxygenase (107 aa).

Residues 2–94 (IIVTNTAKIT…YILDNKITYY (93 aa)) enclose the ABM domain. Asparagine 6 contacts Fe cation. Heme is bound at residue histidine 76.

It belongs to the antibiotic biosynthesis monooxygenase family. Heme-degrading monooxygenase IsdG subfamily. In terms of assembly, homodimer.

It localises to the cytoplasm. The enzyme catalyses heme b + 3 reduced [NADPH--hemoprotein reductase] + 3 O2 = biliverdin IXalpha + CO + Fe(2+) + 3 oxidized [NADPH--hemoprotein reductase] + 3 H2O + H(+). Allows bacterial pathogens to use the host heme as an iron source. Catalyzes the oxidative degradation of the heme macrocyclic porphyrin ring to the biliverdin in the presence of a suitable electron donor such as ascorbate or NADPH--cytochrome P450 reductase, with subsequent release of free iron. In Bacillus thuringiensis subsp. konkukian (strain 97-27), this protein is Heme-degrading monooxygenase.